The following is a 736-amino-acid chain: Catalase-peroxidase (736 aa).

The interval 1-25 is disordered; sequence MSENGKCPVTGKTSKPVAGGGTSNQ. The tryptophyl-tyrosyl-methioninium (Trp-Tyr) (with M-250) cross-link spans 96 to 224; it reads WHSAGTYRMG…LAAVQMGLIY (129 aa). His-97 (proton acceptor) is an active-site residue. Positions 224–250 form a cross-link, tryptophyl-tyrosyl-methioninium (Tyr-Met) (with W-96); the sequence is YVNPEGPDGNPDPIASGKDVRETFARM. His-265 contacts heme b. Residues 294–313 are disordered; sequence GWKSSHGRGKGGDTISSGIE.

The protein belongs to the peroxidase family. Peroxidase/catalase subfamily. In terms of assembly, homodimer or homotetramer. It depends on heme b as a cofactor. In terms of processing, formation of the three residue Trp-Tyr-Met cross-link is important for the catalase, but not the peroxidase activity of the enzyme.

The enzyme catalyses H2O2 + AH2 = A + 2 H2O. It carries out the reaction 2 H2O2 = O2 + 2 H2O. Its function is as follows. Bifunctional enzyme with both catalase and broad-spectrum peroxidase activity. The sequence is that of Catalase-peroxidase from Desulfatibacillum aliphaticivorans.